A 149-amino-acid polypeptide reads, in one-letter code: Small ribosomal subunit protein uS11z (149 aa).

The tract at residues Val130–Leu149 is disordered. Residues Arg140–Leu149 are compositionally biased toward basic residues.

This sequence belongs to the universal ribosomal protein uS11 family.

The polypeptide is Small ribosomal subunit protein uS11z (Zea mays (Maize)).